The following is a 466-amino-acid chain: Asparagine--tRNA ligase (466 aa).

The protein belongs to the class-II aminoacyl-tRNA synthetase family. Homodimer.

It is found in the cytoplasm. It catalyses the reaction tRNA(Asn) + L-asparagine + ATP = L-asparaginyl-tRNA(Asn) + AMP + diphosphate + H(+). This is Asparagine--tRNA ligase from Photobacterium profundum (strain SS9).